Reading from the N-terminus, the 224-residue chain is Myogenin (224 aa).

Phosphoserine; by CaMK2G occurs at positions 77 and 79. The 52-residue stretch at 81 to 132 (DRRRAATLREKRRLKKVNEAFEALKRSTLLNPNQRLPKVEILRSAIQYIERL) folds into the bHLH domain. Residue threonine 87 is modified to Phosphothreonine; by CaMK2G.

As to quaternary structure, homodimer and heterodimer with E12; heterodimerization enhances MYOG DNA-binding and transcriptional activities. Interacts with SMARCA4/BRG1/BAF190A. Interacts (via C-terminal region) with SSRP1 and SUPT16H; the interaction is indicative of an interaction with the FACT complex. Interacts with CSRP3. Phosphorylated by CAMK2G on threonine and serine amino acids in a muscle activity-dependent manner. Phosphorylation of Thr-87 impairs both DNA-binding and trans-activation functions in contracting muscles.

It localises to the nucleus. Its function is as follows. Acts as a transcriptional activator that promotes transcription of muscle-specific target genes and plays a role in muscle differentiation, cell cycle exit and muscle atrophy. Essential for the development of functional embryonic skeletal fiber muscle differentiation. However is dispensable for postnatal skeletal muscle growth; phosphorylation by CAMK2G inhibits its transcriptional activity in respons to muscle activity. Required for the recruitment of the FACT complex to muscle-specific promoter regions, thus promoting gene expression initiation. During terminal myoblast differentiation, plays a role as a strong activator of transcription at loci with an open chromatin structure previously initiated by MYOD1. Together with MYF5 and MYOD1, co-occupies muscle-specific gene promoter core regions during myogenesis. Also cooperates with myocyte-specific enhancer factor MEF2D and BRG1-dependent recruitment of SWI/SNF chromatin-remodeling enzymes to alter chromatin structure at myogenic late gene promoters. Facilitates cell cycle exit during terminal muscle differentiation through the up-regulation of miR-20a expression, which in turn represses genes involved in cell cycle progression. Binds to the E-box containing (E1) promoter region of the miR-20a gene. Also plays a role in preventing reversal of muscle cell differentiation. Contributes to the atrophy-related gene expression in adult denervated muscles. Induces fibroblasts to differentiate into myoblasts. This Bos taurus (Bovine) protein is Myogenin (MYOG).